The following is a 200-amino-acid chain: NAD(P)H-dependent FMN reductase C4B3.06c (200 aa).

Residues R22, 96–99 (QYNG), and Y126 each bind FMN.

As to quaternary structure, homodimer.

The protein resides in the cytoplasm. It is found in the nucleus. The enzyme catalyses FMNH2 + NADP(+) = FMN + NADPH + 2 H(+). It catalyses the reaction FMNH2 + NAD(+) = FMN + NADH + 2 H(+). Functionally, has several reductase activities that are NAD(P)H-dependent and involve FMN as a cofactor. May be involved in ferric iron assimilation. The polypeptide is NAD(P)H-dependent FMN reductase C4B3.06c (Schizosaccharomyces pombe (strain 972 / ATCC 24843) (Fission yeast)).